A 727-amino-acid polypeptide reads, in one-letter code: Phosphoribosylformylglycinamidine synthase subunit PurL (727 aa).

Histidine 47 is an active-site residue. The ATP site is built by tyrosine 50 and lysine 82. Glutamate 84 provides a ligand contact to Mg(2+). Residues 85–88 (SHNH) and arginine 107 contribute to the substrate site. Catalysis depends on histidine 86, which acts as the Proton acceptor. Residue aspartate 108 participates in Mg(2+) binding. Substrate is bound at residue glutamine 229. Aspartate 257 lines the Mg(2+) pocket. Substrate is bound at residue 301–303 (ESQ). 2 residues coordinate ATP: aspartate 486 and glycine 523. Residue asparagine 524 participates in Mg(2+) binding. Serine 526 lines the substrate pocket.

Belongs to the FGAMS family. As to quaternary structure, monomer. Part of the FGAM synthase complex composed of 1 PurL, 1 PurQ and 2 PurS subunits.

It localises to the cytoplasm. The catalysed reaction is N(2)-formyl-N(1)-(5-phospho-beta-D-ribosyl)glycinamide + L-glutamine + ATP + H2O = 2-formamido-N(1)-(5-O-phospho-beta-D-ribosyl)acetamidine + L-glutamate + ADP + phosphate + H(+). Its pathway is purine metabolism; IMP biosynthesis via de novo pathway; 5-amino-1-(5-phospho-D-ribosyl)imidazole from N(2)-formyl-N(1)-(5-phospho-D-ribosyl)glycinamide: step 1/2. Its function is as follows. Part of the phosphoribosylformylglycinamidine synthase complex involved in the purines biosynthetic pathway. Catalyzes the ATP-dependent conversion of formylglycinamide ribonucleotide (FGAR) and glutamine to yield formylglycinamidine ribonucleotide (FGAM) and glutamate. The FGAM synthase complex is composed of three subunits. PurQ produces an ammonia molecule by converting glutamine to glutamate. PurL transfers the ammonia molecule to FGAR to form FGAM in an ATP-dependent manner. PurS interacts with PurQ and PurL and is thought to assist in the transfer of the ammonia molecule from PurQ to PurL. The protein is Phosphoribosylformylglycinamidine synthase subunit PurL of Petrotoga mobilis (strain DSM 10674 / SJ95).